We begin with the raw amino-acid sequence, 446 residues long: Signal recognition particle protein (446 aa).

Residues 108-115 (GLQGAGKT), 191-195 (DTAGR), and 249-252 (TKLD) contribute to the GTP site.

It belongs to the GTP-binding SRP family. SRP54 subfamily. As to quaternary structure, part of the signal recognition particle protein translocation system, which is composed of SRP and FtsY. Interacts with a small cytoplasmic RNA (sc-RNA).

The protein resides in the cytoplasm. The enzyme catalyses GTP + H2O = GDP + phosphate + H(+). Its function is as follows. Involved in targeting and insertion of nascent membrane proteins into the cytoplasmic membrane. Binds to the hydrophobic signal sequence of the ribosome-nascent chain (RNC) as it emerges from the ribosomes. The SRP-RNC complex is then targeted to the cytoplasmic membrane where it interacts with the SRP receptor FtsY. Interaction with FtsY leads to the transfer of the RNC complex to the Sec translocase for insertion into the membrane, the hydrolysis of GTP by both Ffh and FtsY, and the dissociation of the SRP-FtsY complex into the individual components. This is Signal recognition particle protein from Bacillus subtilis (strain 168).